The primary structure comprises 201 residues: MTIRYPNGHAYRAPAKKIGSQFSSTNTNYGKRGMTLEEELNESNTYYEVNGVAVVHKKPTPIRIVKVDYPKRSAAVIKEAYFSTASTTDYNGVYRGHYLDFDAKETRNTTSFPLQNFHQHQIDHMRACTTQGGICFAIIKFVTRQEIYLYRAQDLFTFWDAQQQGGRKSIPYATIAQDGIQIPAELQLPVPYLKAVDQLLS.

Thr-87, Asp-89, Asp-102, and Gln-121 together coordinate Mg(2+).

The protein belongs to the RecU family. The cofactor is Mg(2+).

It is found in the cytoplasm. The enzyme catalyses Endonucleolytic cleavage at a junction such as a reciprocal single-stranded crossover between two homologous DNA duplexes (Holliday junction).. Endonuclease that resolves Holliday junction intermediates in genetic recombination. Cleaves mobile four-strand junctions by introducing symmetrical nicks in paired strands. Promotes annealing of linear ssDNA with homologous dsDNA. Required for DNA repair, homologous recombination and chromosome segregation. In Levilactobacillus brevis (strain ATCC 367 / BCRC 12310 / CIP 105137 / JCM 1170 / LMG 11437 / NCIMB 947 / NCTC 947) (Lactobacillus brevis), this protein is Holliday junction resolvase RecU.